We begin with the raw amino-acid sequence, 294 residues long: Non-selective voltage-gated ion channel VDAC2 (294 aa).

An N-acetylalanine modification is found at Ala-2. Residues Lys-23 and Lys-31 each contribute to the ATP site. Lys-31 is subject to N6-acetyllysine; alternate. Residue Lys-31 is modified to N6-succinyllysine; alternate. Residue Lys-31 forms a Glycyl lysine isopeptide (Lys-Gly) (interchain with G-Cter in ubiquitin); alternate linkage. 2 consecutive transmembrane segments (beta stranded) span residues 37–46 (LVKLDVKTKS) and 50–58 (VEFSTSGSS). Lys-64 is covalently cross-linked (Glycyl lysine isopeptide (Lys-Gly) (interchain with G-Cter in ubiquitin)). A beta stranded transmembrane segment spans residues 65-75 (VTGTLETKYKW). Position 78 is a phosphotyrosine (Tyr-78). 3 beta stranded membrane passes run 80 to 87 (LTFTEKWN), 91 to 100 (TLGTEIAIED), and 106 to 115 (LKLTFDTTFS). Thr-118 carries the post-translational modification Phosphothreonine. Lys-120 bears the N6-acetyllysine; alternate mark. Residue Lys-120 forms a Glycyl lysine isopeptide (Lys-Gly) (interchain with G-Cter in ubiquitin); alternate linkage. Residue Lys-121 forms a Glycyl lysine isopeptide (Lys-Gly) (interchain with G-Cter in ubiquitin) linkage. 4 beta stranded membrane passes run 122–131 (SGKIKSSYKR), 134–141 (INLGCDVD), 148–156 (AIHGSAVFG), and 161–169 (LAGYQMTFD). Lys-172 participates in a covalent cross-link: Glycyl lysine isopeptide (Lys-Gly) (interchain with G-Cter in ubiquitin). 6 consecutive transmembrane segments (beta stranded) span residues 174-186 (KLTR…GYRT), 189-196 (FQLHTNVN), 200-209 (EFGGSIYQKV), 213-222 (LDTSVNLAWT), 229-238 (RFGIAAKYQL), and 242-249 (ASISAKVN). A Phosphoserine modification is found at Ser-251. Residues 253-255 (LIG) and 271-275 (SALVD) each bind NAD(+). Beta stranded transmembrane passes span 253 to 262 (LIGVGYTQTL) and 265 to 274 (GVKLTLSALV). The residue at position 277 (Lys-277) is an N6-acetyllysine; alternate. A Glycyl lysine isopeptide (Lys-Gly) (interchain with G-Cter in ubiquitin); alternate cross-link involves residue Lys-277. The chain crosses the membrane as a beta stranded span at residues 284 to 293 (HKLGLALELE).

It belongs to the eukaryotic mitochondrial porin family. Monomer, homodimer and higher order oligomers; formation of higher order structures is necessary for scramblase activity. Interacts with ARMC12 in a TBC1D21-dependent manner. Interacts with KLC3. Interacts with SPATA33. Interacts with PPP3CC in a SPATA33-dependent manner. Ubiquitinated by PRKN during mitophagy, leading to its degradation and enhancement of mitophagy. Deubiquitinated by USP30.

Its subcellular location is the mitochondrion outer membrane. The protein resides in the membrane. The catalysed reaction is chloride(in) = chloride(out). The enzyme catalyses K(+)(in) = K(+)(out). It catalyses the reaction a 1,2-diacyl-sn-glycero-3-phospho-L-serine(in) = a 1,2-diacyl-sn-glycero-3-phospho-L-serine(out). It carries out the reaction a 1,2-diacyl-sn-glycero-3-phosphocholine(in) = a 1,2-diacyl-sn-glycero-3-phosphocholine(out). The catalysed reaction is a 1,2-diacyl-sn-glycero-3-phospho-(1D-myo-inositol)(in) = a 1,2-diacyl-sn-glycero-3-phospho-(1D-myo-inositol)(out). Non-selective voltage-gated ion channel that mediates the transport of anions and cations through the mitochondrion outer membrane and plasma membrane. The channel adopts an open conformation at zero mV and a closed conformation at both positive and negative potentials. There are two populations of channels; the main that functions in a lower open-state conductance with lower ion selectivity, that switch, in a voltage-dependent manner, from the open to a low-conducting 'closed' state and the other that has a normal ion selectivity in the typical high conductance, 'open' state. Binds various lipids, including the sphingolipid ceramide, the phospholipid phosphatidylcholine, and the sterols cholesterol and oxysterol. Binding of ceramide promotes the mitochondrial outer membrane permeabilization (MOMP) apoptotic pathway. Functionally, catalyzes the scrambling of phospholipids across the outer mitochondrial membrane; the mechanism is unrelated to channel activity and is capable of translocating both anionic and zwitterionic phospholipids. The protein is Non-selective voltage-gated ion channel VDAC2 of Bos taurus (Bovine).